We begin with the raw amino-acid sequence, 274 residues long: Rhamnulose-1-phosphate aldolase (274 aa).

The active site involves Glu117. Residues His141, His143, and His212 each coordinate Zn(2+).

It belongs to the aldolase class II family. RhaD subfamily. As to quaternary structure, homotetramer. Zn(2+) is required as a cofactor.

The protein resides in the cytoplasm. It carries out the reaction L-rhamnulose 1-phosphate = (S)-lactaldehyde + dihydroxyacetone phosphate. Its pathway is carbohydrate degradation; L-rhamnose degradation; glycerone phosphate from L-rhamnose: step 3/3. In terms of biological role, catalyzes the reversible cleavage of L-rhamnulose-1-phosphate to dihydroxyacetone phosphate (DHAP) and L-lactaldehyde. This is Rhamnulose-1-phosphate aldolase from Pectobacterium atrosepticum (strain SCRI 1043 / ATCC BAA-672) (Erwinia carotovora subsp. atroseptica).